The chain runs to 152 residues: Ribosome maturation factor RimP (152 aa).

This sequence belongs to the RimP family.

Its subcellular location is the cytoplasm. In terms of biological role, required for maturation of 30S ribosomal subunits. The sequence is that of Ribosome maturation factor RimP from Pseudomonas aeruginosa (strain LESB58).